The primary structure comprises 124 residues: Large ribosomal subunit protein bL12 (124 aa).

A disordered region spans residues 94-124 (APKPVKESVPKAAAEEAKKKLEEAGAKAEIK).

Belongs to the bacterial ribosomal protein bL12 family. Homodimer. Part of the ribosomal stalk of the 50S ribosomal subunit. Forms a multimeric L10(L12)X complex, where L10 forms an elongated spine to which 2 to 4 L12 dimers bind in a sequential fashion. Binds GTP-bound translation factors.

Its function is as follows. Forms part of the ribosomal stalk which helps the ribosome interact with GTP-bound translation factors. Is thus essential for accurate translation. This Paraburkholderia phytofirmans (strain DSM 17436 / LMG 22146 / PsJN) (Burkholderia phytofirmans) protein is Large ribosomal subunit protein bL12.